A 600-amino-acid chain; its full sequence is CDK5RAP1-like protein (600 aa).

Positions 45 to 66 (LSSAAHPPPPPPRRLARSGPSR) are disordered. Residues 93–222 (GRIYHETYGC…LPRLLQEVDY (130 aa)) form the MTTase N-terminal domain. [4Fe-4S] cluster-binding residues include C102, C139, C185, C260, C264, and C267. The Radical SAM core domain maps to 246–501 (SDNSVTAFVS…ISTFRETTAK (256 aa)). The region spanning 504–580 (DSQVGTVQLV…TASLSGDVIA (77 aa)) is the TRAM domain.

It belongs to the methylthiotransferase family. MiaB subfamily. It depends on [4Fe-4S] cluster as a cofactor.

Potential regulator of CDK5 activity. The protein is CDK5RAP1-like protein of Oryza sativa subsp. japonica (Rice).